The sequence spans 153 residues: Regulatory protein RecX (153 aa).

It belongs to the RecX family.

Its subcellular location is the cytoplasm. Modulates RecA activity. This chain is Regulatory protein RecX, found in Pseudomonas aeruginosa (strain UCBPP-PA14).